The sequence spans 72 residues: Translation initiation factor IF-1 (72 aa).

Positions 1–72 (MAKEGNIEME…SKGRIVYRAR (72 aa)) constitute an S1-like domain.

The protein belongs to the IF-1 family. In terms of assembly, component of the 30S ribosomal translation pre-initiation complex which assembles on the 30S ribosome in the order IF-2 and IF-3, IF-1 and N-formylmethionyl-tRNA(fMet); mRNA recruitment can occur at any time during PIC assembly.

Its subcellular location is the cytoplasm. Functionally, one of the essential components for the initiation of protein synthesis. Stabilizes the binding of IF-2 and IF-3 on the 30S subunit to which N-formylmethionyl-tRNA(fMet) subsequently binds. Helps modulate mRNA selection, yielding the 30S pre-initiation complex (PIC). Upon addition of the 50S ribosomal subunit IF-1, IF-2 and IF-3 are released leaving the mature 70S translation initiation complex. The chain is Translation initiation factor IF-1 from Hahella chejuensis (strain KCTC 2396).